The primary structure comprises 358 residues: Pituitary-specific positive transcription factor 1 (358 aa).

The 9aaTAD signature appears at 5–12 (AFSADSFT). A disordered region spans residues 164-195 (PAVLSEEPPLGGTKDLRLRSRPPDDPPDMDSP). A compositionally biased stretch (basic and acidic residues) spans 177 to 187 (KDLRLRSRPPD). Positions 192–266 (MDSPQIRELE…ILAKWLDEAE (75 aa)) constitute a POU-specific domain. Positions 282 to 341 (KRKRRTTISLGAKEALERSFGEKIKPSSQEIVRMAEGLHLEKEVVRVWFCNRRQREKRVK) form a DNA-binding region, homeobox.

It belongs to the POU transcription factor family. Class-1 subfamily.

Its subcellular location is the nucleus. Its function is as follows. Transcription factor that activates growth hormone and prolactin genes. Specifically binds to the consensus sequence 5'-TAAAT-3'. This chain is Pituitary-specific positive transcription factor 1 (pou1f1), found in Oncorhynchus mykiss (Rainbow trout).